The chain runs to 625 residues: Folylpolyglutamate synthase (625 aa).

141–144 (GKGS) serves as a coordination point for ATP. Mg(2+) is bound by residues S165, E234, and H262. ATP-binding residues include R384 and D414.

Belongs to the folylpolyglutamate synthase family. A monovalent cation serves as cofactor.

It is found in the mitochondrion inner membrane. The protein resides in the mitochondrion matrix. The catalysed reaction is (6S)-5,6,7,8-tetrahydrofolyl-(gamma-L-Glu)(n) + L-glutamate + ATP = (6S)-5,6,7,8-tetrahydrofolyl-(gamma-L-Glu)(n+1) + ADP + phosphate + H(+). The protein operates within cofactor biosynthesis; tetrahydrofolylpolyglutamate biosynthesis. Catalyzes conversion of folates to polyglutamate derivatives allowing concentration of folate compounds in the cell and the intracellular retention of these cofactors, which are important substrates for most of the folate-dependent enzymes that are involved in one-carbon transfer reactions involved in purine, pyrimidine and amino acid synthesis. Essential for organellar and whole-plant folate homeostasis. In Arabidopsis thaliana (Mouse-ear cress), this protein is Folylpolyglutamate synthase.